The chain runs to 50 residues: FLGTINLSLCEQERDADEEERRDEPDESDVEVEKRFLPIVTNLLSGLLGK.

An N-terminal signal peptide occupies residues 1-10; it reads FLGTINLSLC. A propeptide spanning residues 11–35 is cleaved from the precursor; it reads EQERDADEEERRDEPDESDVEVEKR. Residues 12-31 are disordered; the sequence is QERDADEEERRDEPDESDVE. Over residues 14–30 the composition is skewed to acidic residues; sequence RDADEEERRDEPDESDV. Leucine amide is present on Leu-48.

This sequence belongs to the frog skin active peptide (FSAP) family. Temporin subfamily. In terms of tissue distribution, expressed by the skin glands.

The protein resides in the secreted. Functionally, amphipathic alpha-helical peptide with no antimicrobial activity. Does not display anti-leishmania activity. Does not show hemolytic activity (LC(50)&gt;116 uM). In Pelophylax saharicus (Sahara frog), this protein is Temporin-SHb.